The primary structure comprises 443 residues: Adenylyltransferase and sulfurtransferase UBA4 (443 aa).

Residues Gly81, Asp102, 109–113, Lys126, and 170–171 contribute to the ATP site; these read SNLHR and DS. Residues Cys212 and Cys215 each contribute to the Zn(2+) site. Catalysis depends on Cys229, which acts as the Glycyl thioester intermediate; for adenylyltransferase activity. Zn(2+) contacts are provided by Cys290 and Cys293. Residues 342–441 enclose the Rhodanese domain; sequence KERGFVCLDV…YIDEINPSLP (100 aa). Cys400 (cysteine persulfide intermediate; for sulfurtransferase activity) is an active-site residue.

The protein in the N-terminal section; belongs to the HesA/MoeB/ThiF family. UBA4 subfamily. Requires Zn(2+) as cofactor.

The protein localises to the cytoplasm. It is found in the cytosol. It participates in tRNA modification; 5-methoxycarbonylmethyl-2-thiouridine-tRNA biosynthesis. In terms of biological role, plays a central role in 2-thiolation of mcm(5)S(2)U at tRNA wobble positions of cytosolic tRNA(Lys), tRNA(Glu) and tRNA(Gln). Acts by mediating the C-terminal thiocarboxylation of sulfur carrier URM1. Its N-terminus first activates URM1 as acyl-adenylate (-COAMP), then the persulfide sulfur on the catalytic cysteine is transferred to URM1 to form thiocarboxylation (-COSH) of its C-terminus. The reaction probably involves hydrogen sulfide that is generated from the persulfide intermediate and that acts as a nucleophile towards URM1. Subsequently, a transient disulfide bond is formed. Does not use thiosulfate as sulfur donor; NFS1 probably acting as a sulfur donor for thiocarboxylation reactions. Prior mcm(5) tRNA modification by the elongator complex is required for 2-thiolation. May also be involved in protein urmylation. This Eremothecium gossypii (strain ATCC 10895 / CBS 109.51 / FGSC 9923 / NRRL Y-1056) (Yeast) protein is Adenylyltransferase and sulfurtransferase UBA4.